Consider the following 205-residue polypeptide: Holliday junction branch migration complex subunit RuvA (205 aa).

Positions Met1–Ile64 are domain I. Residues Ser65–Asp143 form a domain II region. Positions Gln136–His157 are disordered. The interval Arg144–Glu156 is flexible linker. Residues His157–Ser205 form a domain III region.

The protein belongs to the RuvA family. In terms of assembly, homotetramer. Forms an RuvA(8)-RuvB(12)-Holliday junction (HJ) complex. HJ DNA is sandwiched between 2 RuvA tetramers; dsDNA enters through RuvA and exits via RuvB. An RuvB hexamer assembles on each DNA strand where it exits the tetramer. Each RuvB hexamer is contacted by two RuvA subunits (via domain III) on 2 adjacent RuvB subunits; this complex drives branch migration. In the full resolvosome a probable DNA-RuvA(4)-RuvB(12)-RuvC(2) complex forms which resolves the HJ.

The protein localises to the cytoplasm. Functionally, the RuvA-RuvB-RuvC complex processes Holliday junction (HJ) DNA during genetic recombination and DNA repair, while the RuvA-RuvB complex plays an important role in the rescue of blocked DNA replication forks via replication fork reversal (RFR). RuvA specifically binds to HJ cruciform DNA, conferring on it an open structure. The RuvB hexamer acts as an ATP-dependent pump, pulling dsDNA into and through the RuvAB complex. HJ branch migration allows RuvC to scan DNA until it finds its consensus sequence, where it cleaves and resolves the cruciform DNA. The protein is Holliday junction branch migration complex subunit RuvA of Idiomarina loihiensis (strain ATCC BAA-735 / DSM 15497 / L2-TR).